The chain runs to 106 residues: Thiosulfate sulfurtransferase GlpE (106 aa).

The 89-residue stretch at 17 to 105 (EQGEAKLVDI…WQRAQLPIVR (89 aa)) folds into the Rhodanese domain. Catalysis depends on cysteine 65, which acts as the Cysteine persulfide intermediate.

Belongs to the GlpE family.

It localises to the cytoplasm. The catalysed reaction is thiosulfate + hydrogen cyanide = thiocyanate + sulfite + 2 H(+). It carries out the reaction thiosulfate + [thioredoxin]-dithiol = [thioredoxin]-disulfide + hydrogen sulfide + sulfite + 2 H(+). Functionally, transferase that catalyzes the transfer of sulfur from thiosulfate to thiophilic acceptors such as cyanide or dithiols. May function in a CysM-independent thiosulfate assimilation pathway by catalyzing the conversion of thiosulfate to sulfite, which can then be used for L-cysteine biosynthesis. This Vibrio parahaemolyticus serotype O3:K6 (strain RIMD 2210633) protein is Thiosulfate sulfurtransferase GlpE.